The following is a 428-amino-acid chain: F-box/LRR-repeat protein 3 (428 aa).

The span at 1–21 (MKRGGRDSDRNSSEEGTAEKS) shows a compositional bias: basic and acidic residues. The disordered stretch occupies residues 1–27 (MKRGGRDSDRNSSEEGTAEKSKKLRTT). Positions 34-81 (CDWGNLLQDIILQVFKYLPLLDRAHASQVCRNWNQVFHMPDLWRCFEF) constitute an F-box domain. 7 LRR repeats span residues 119-146 (SSKESAEAACDILSQLVNCSLKTLGLIS), 181-207 (DTPVDDPSLKVLVANNSDTLKLLKMSS), 208-233 (CPHVSPAGILCVADQCHGLRELALNY), 234-259 (HLLSDELLLALSSEKHVRLEHLRIDV), 316-341 (GRSVSKDVLGRVGMTCPRLVELVVCA), 343-368 (GLRPLDEELIRIAERCKNLSAIGLGE), and 369-394 (CEVSCSAFVEFVKMCGGRLSQLSIME).

Part of the SCF (SKP1-CUL1-F-box) E3 ubiquitin-protein ligase complex SCF(FBXL3) composed of CUL1, SKP1, RBX1 and FBXL3. Interacts with CRY1 and CRY2 (phosphorylated). Interacts with HDAC3. Interacts with KDM8. Undergoes autophagy-mediated degradation in the liver in a time-dependent manner. In terms of tissue distribution, widely expressed.

It localises to the nucleus. The protein resides in the cytoplasm. It functions in the pathway protein modification; protein ubiquitination. Functionally, substrate-recognition component of the SCF(FBXL3) E3 ubiquitin ligase complex involved in circadian rhythm function. Plays a key role in the maintenance of both the speed and the robustness of the circadian clock oscillation. The SCF(FBXL3) complex mainly acts in the nucleus and mediates ubiquitination and subsequent degradation of CRY1 and CRY2. Activity of the SCF(FBXL3) complex is counteracted by the SCF(FBXL21) complex. The sequence is that of F-box/LRR-repeat protein 3 (FBXL3) from Homo sapiens (Human).